Consider the following 496-residue polypeptide: Protein TOO MANY MOUTHS (496 aa).

The first 23 residues, 1–23 (MARYEFFRQIFIVLSIVSPLVRS), serve as a signal peptide directing secretion. Topologically, residues 24–473 (FTVITSDSTA…ATDVSSTSKS (450 aa)) are extracellular. LRR repeat units lie at residues 158–182 (GSSLQTLVLRENGFLGPIPDELGNL), 183–208 (TNLKVLDLHKNHLNGSIPLSFNRFSG), 210–228 (RSLDLSGNRLTGSIPGFVL), 229–252 (PALSVLDLNQNLLTGPVPPTLTSC), 254–276 (SLIKIDLSRNRVTGPIPESINRL), 277–300 (NQLVLLDLSYNRLSGPFPSSLQGL), 302–325 (SLQALMLKGNTKFSTTIPENAFKG), 326–350 (LKNLMILVLSNTNIQGSIPKSLTRL), 351–373 (NSLRVLHLEGNNLTGEIPLEFRD), and 375–401 (KHLSELRLNDNSLTGPVPFERDTVWRM). Residues N181 and N196 are each glycosylated (N-linked (GlcNAc...) asparagine). N-linked (GlcNAc...) asparagine glycosylation occurs at N362. The disordered stretch occupies residues 438–464 (AETSRPAPSGTVQHLSREEDGALPDGA). Residues 474-494 (LGFSYLSAFFLVFPNFIFMLI) traverse the membrane as a helical segment. Residues 495–496 (SS) lie on the Cytoplasmic side of the membrane.

The protein belongs to the RLP family. Forms heterodimer with ERECTA or ERL1 through their extracellular domains. Not able to form homodimer. Interacts with EPF2 but not with EPF1. Interacts with SERK1, SERK2, SERK3/BAK1 and SERK4. Interacts with EPFL9/STOMAGEN. In terms of tissue distribution, in epidermal cells of developing shoots and leaves, but not in roots. Expressed in the stomatal cell lineage in the developing epidermis. Accumulates strongly in meristemoid mother cells (MMC) and meristemoids, somewhat less in meristemoid sister cells (stomatal-lineage ground cells, SLGC), and is barely detected in pavement cells.

It is found in the cell membrane. Functionally, promotes cell fate progression in stomatal development. In leaves, needed to correctly orient spacing divisions, to limit the number of asymmetric divisions in neighbor cells, and to promote the asymmetric (amplifying) divisions of meristemoids. In stems, promotes the conversion of meristemoids into guard mother cells (GMC). Positively regulates CAPRICE (CPC) expression in differentiating stomaless-forming cell files. Forms constitutive complexes with ERECTA and ERL1 involved in the recognition of the stomatal regulatory peptides EPF1, EPF2 and EPFL9/STOMAGEN. Modulates the activity of the ligand-receptor pairs EPF2-ERECTA and EPF1-ERL1 in stomatal development. Functions in a combinatorial specific manner with the ERECTA-family (ERf) receptor kinases in the regulation of the immune response. The sequence is that of Protein TOO MANY MOUTHS from Arabidopsis thaliana (Mouse-ear cress).